We begin with the raw amino-acid sequence, 351 residues long: Probable inactive tRNA-specific adenosine deaminase-like protein 3 (351 aa).

M1 is modified (N-acetylmethionine). Residues 1 to 26 (MEPAPGLVEQPKCLEAGSPEPEPAPW) are disordered. The CMP/dCMP-type deaminase domain maps to 171–336 (AAMQSHMERA…PDLNHRFQVF (166 aa)). Zn(2+) contacts are provided by H223, C291, and C294.

It belongs to the cytidine and deoxycytidylate deaminase family. ADAT3 subfamily. It depends on Zn(2+) as a cofactor.

This is Probable inactive tRNA-specific adenosine deaminase-like protein 3 (ADAT3) from Homo sapiens (Human).